The chain runs to 430 residues: Crotonyl-CoA carboxylase/reductase (430 aa).

Belongs to the zinc-containing alcohol dehydrogenase family. Crotonyl-CoA carboxylase/reductase subfamily. As to quaternary structure, homodimer. Requires Despite some sequence similarity to zinc-containing alcohol dehydrogenases, this enzyme does not bind any metals. as cofactor.

The catalysed reaction is (2S)-ethylmalonyl-CoA + NADP(+) = (2E)-butenoyl-CoA + CO2 + NADPH. The enzyme catalyses (S)-methylmalonyl-CoA + NADP(+) = acryloyl-CoA + CO2 + NADPH. It catalyses the reaction butanoyl-CoA + NADP(+) = (2E)-butenoyl-CoA + NADPH + H(+). Catalyzes the NADPH-dependent reductive carboxylation of crotonyl-CoA ((2E)-butenoyl-CoA) to (2S)-ethylmalonyl-CoA, in the presence of CO2. This is a key reaction in the ethylmalonyl-CoA pathway for acetyl-CoA assimilation required for R.sphaeroides growth on acetate as sole carbon source. Is also able to accept acryloyl-CoA as an alternative substrate, yielding (2S)-methylmalonyl-CoA. To a lesser extent, when CO2 is absent, the enzyme also catalyzes the reduction of crotonyl-CoA to butanoyl-CoA. The polypeptide is Crotonyl-CoA carboxylase/reductase (Cereibacter sphaeroides (strain ATCC 17023 / DSM 158 / JCM 6121 / CCUG 31486 / LMG 2827 / NBRC 12203 / NCIMB 8253 / ATH 2.4.1.) (Rhodobacter sphaeroides)).